The chain runs to 287 residues: Pyridoxal kinase PdxY (287 aa).

Residues serine 9 and 44–45 contribute to the substrate site; that span reads MQ. ATP is bound by residues aspartate 111, alanine 142, glutamate 147, and lysine 180. Aspartate 221 contributes to the substrate binding site.

It belongs to the pyridoxine kinase family. PdxY subfamily. Homodimer. Mg(2+) is required as a cofactor.

The enzyme catalyses pyridoxal + ATP = pyridoxal 5'-phosphate + ADP + H(+). The protein operates within cofactor metabolism; pyridoxal 5'-phosphate salvage; pyridoxal 5'-phosphate from pyridoxal: step 1/1. In terms of biological role, pyridoxal kinase involved in the salvage pathway of pyridoxal 5'-phosphate (PLP). Catalyzes the phosphorylation of pyridoxal to PLP. The polypeptide is Pyridoxal kinase PdxY (Burkholderia mallei (strain ATCC 23344)).